The following is a 1058-amino-acid chain: Probable plasma membrane ATPase (1058 aa).

Residues 1–29 (MDNNQIPKNSPESSAINSAESSPKSNVSS) are compositionally biased toward polar residues. The tract at residues 1-123 (MDNNQIPKNS…SSSGKKEEDY (123 aa)) is disordered. Over 1–212 (MDNNQIPKNS…DVKRYPILEF (212 aa)) the chain is Cytoplasmic. Residues 31–40 (VLHENHHKEQ) are compositionally biased toward basic and acidic residues. Over residues 41–66 (QQLQQQLQQEQQQQQLPTTPQSEPTQ) the composition is skewed to low complexity. Over residues 96-111 (SLKTISGYPSSKNTEA) the composition is skewed to polar residues. Residues 213–232 (LYFMWNPLSWTMEVAAIVSI) form a helical membrane-spanning segment. Over 233–237 (ALLDW) the chain is Extracellular. Residues 238 to 258 (VDFILICALLLLNATIGFIEE) traverse the membrane as a helical segment. The Cytoplasmic segment spans residues 259 to 387 (NTAGNAVEAL…GHLQVILRNI (129 aa)). Residues 388–407 (GLFCISFIAIWVLVELLVDF) traverse the membrane as a helical segment. Over 408–425 (LGYDGYCHGVGGGRCLPL) the chain is Extracellular. Residues 426–447 (NNALVLLVGGIPIAMPTVLSVT) form a helical membrane-spanning segment. Topologically, residues 448–783 (MAIGATQLSK…SSRKIFQRMR (336 aa)) are cytoplasmic. D480 serves as the catalytic 4-aspartylphosphate intermediate. 2 residues coordinate Mg(2+): D728 and D732. The helical transmembrane segment at 784-805 (NYVIYSVAATVRICTTFGILTV) threads the bilayer. Over 806 to 810 (AWNFK) the chain is Extracellular. Residues 811 to 833 (FPTIATVIIAILNDGTMLTISKD) form a helical membrane-spanning segment. Residues 834–849 (RVRARNEPDQWNLFEV) are Cytoplasmic-facing. A helical transmembrane segment spans residues 850–870 (FTMALCYGFYLVGSTIVFFAI). Over 871–889 (IHDGTWFHDAINLRILTDN) the chain is Extracellular. Residues 890–910 (ELRGLIYLQVSISGLATIFVS) traverse the membrane as a helical segment. The Cytoplasmic segment spans residues 911 to 922 (RSQGFSYFERPG). Residues 923–943 (NLVIFAFVMSQIVATFIGVYG) traverse the membrane as a helical segment. Topologically, residues 944–967 (FRGYPHDSFSDNPDYPVHGTNFQG) are extracellular. The chain crosses the membrane as a helical span at residues 968 to 988 (CGWGWAVCAWIWCFLWYIPMD). Over 989–1058 (FIKLGVTYIL…HKSVVTDNKV (70 aa)) the chain is Cytoplasmic.

It belongs to the cation transport ATPase (P-type) (TC 3.A.3) family. Type IIIA subfamily.

The protein localises to the cell membrane. The enzyme catalyses ATP + H2O + H(+)(in) = ADP + phosphate + 2 H(+)(out). With respect to regulation, acid pH levels increase its ATPase activity. In terms of biological role, P-type plasma membrane H+-ATPase (proton pump). The proton gradient it generates drives the active transport of nutrients by H(+) symport. The resulting external acidification and/or internal alkinization may mediate growth responses. The chain is Probable plasma membrane ATPase (patB) from Dictyostelium discoideum (Social amoeba).